Reading from the N-terminus, the 334-residue chain is Aspartate carbamoyltransferase catalytic subunit (334 aa).

Residues Arg70 and Thr71 each coordinate carbamoyl phosphate. Lys98 contacts L-aspartate. Carbamoyl phosphate is bound by residues Arg120, His150, and Gln153. Arg183 and Arg239 together coordinate L-aspartate. 2 residues coordinate carbamoyl phosphate: Gly280 and Pro281.

This sequence belongs to the aspartate/ornithine carbamoyltransferase superfamily. ATCase family. As to quaternary structure, heterododecamer (2C3:3R2) of six catalytic PyrB chains organized as two trimers (C3), and six regulatory PyrI chains organized as three dimers (R2).

The enzyme catalyses carbamoyl phosphate + L-aspartate = N-carbamoyl-L-aspartate + phosphate + H(+). The protein operates within pyrimidine metabolism; UMP biosynthesis via de novo pathway; (S)-dihydroorotate from bicarbonate: step 2/3. Functionally, catalyzes the condensation of carbamoyl phosphate and aspartate to form carbamoyl aspartate and inorganic phosphate, the committed step in the de novo pyrimidine nucleotide biosynthesis pathway. The chain is Aspartate carbamoyltransferase catalytic subunit from Pseudomonas paraeruginosa (strain DSM 24068 / PA7) (Pseudomonas aeruginosa (strain PA7)).